Reading from the N-terminus, the 141-residue chain is Prefoldin subunit alpha (141 aa).

Belongs to the prefoldin subunit alpha family. In terms of assembly, heterohexamer of two alpha and four beta subunits.

The protein resides in the cytoplasm. In terms of biological role, molecular chaperone capable of stabilizing a range of proteins. Seems to fulfill an ATP-independent, HSP70-like function in archaeal de novo protein folding. The protein is Prefoldin subunit alpha (pfdA) of Methanothermobacter thermautotrophicus (strain ATCC 29096 / DSM 1053 / JCM 10044 / NBRC 100330 / Delta H) (Methanobacterium thermoautotrophicum).